Reading from the N-terminus, the 139-residue chain is MKKGTVLNSDISSMISRLGHTDTLVVCDAGLPIPKSTTRIDMALTQGVPSFMQVLGVVTNEMQVEAAIIAEEIKQHNPQLHETLLTHLEQLQKHQGNTIEIRYTTHEQFKQQTAESQAVIRSGECSPYANIILCAGVTF.

The active-site Proton donor is the His20. Substrate is bound by residues Asp28, His106, and 128 to 130; that span reads YAN.

The protein belongs to the RbsD / FucU family. RbsD subfamily. Homodecamer.

It is found in the cytoplasm. It carries out the reaction beta-D-ribopyranose = beta-D-ribofuranose. Its pathway is carbohydrate metabolism; D-ribose degradation; D-ribose 5-phosphate from beta-D-ribopyranose: step 1/2. In terms of biological role, catalyzes the interconversion of beta-pyran and beta-furan forms of D-ribose. The sequence is that of D-ribose pyranase from Escherichia coli O139:H28 (strain E24377A / ETEC).